The primary structure comprises 177 residues: Large ribosomal subunit protein uL6 (177 aa).

It belongs to the universal ribosomal protein uL6 family. In terms of assembly, part of the 50S ribosomal subunit.

This protein binds to the 23S rRNA, and is important in its secondary structure. It is located near the subunit interface in the base of the L7/L12 stalk, and near the tRNA binding site of the peptidyltransferase center. This is Large ribosomal subunit protein uL6 from Salmonella dublin (strain CT_02021853).